Reading from the N-terminus, the 467-residue chain is Gamma-aminobutyric acid receptor subunit gamma-3 (467 aa).

An N-terminal signal peptide occupies residues 1-17 (MAAKLLLLLCLFSGLHA). The Extracellular portion of the chain corresponds to 18-256 (RSRRVEEDDS…FELSRRMGYF (239 aa)). A glycan (N-linked (GlcNAc...) asparagine) is linked at Asn-110. Cys-171 and Cys-185 form a disulfide bridge. Residue Asn-228 is glycosylated (N-linked (GlcNAc...) asparagine). A helical transmembrane segment spans residues 257 to 277 (TIQTYIPCILTVVLSWVSFWI). The Cytoplasmic portion of the chain corresponds to 278–283 (KKDATP). Residues 284-303 (ARTTLGITTVLTMTTLSTIA) form a helical membrane-spanning segment. Residues 304-311 (RKSLPRVS) lie on the Extracellular side of the membrane. The chain crosses the membrane as a helical span at residues 312-332 (YVTAMDLFVTVCFLFVFAALM). Residues 333–446 (EYATLNYYSS…DVSELDSYSR (114 aa)) lie on the Cytoplasmic side of the membrane. The chain crosses the membrane as a helical span at residues 447-467 (VFFPTSFLLFNLVYWVGYLYL).

It belongs to the ligand-gated ion channel (TC 1.A.9) family. Gamma-aminobutyric acid receptor (TC 1.A.9.5) subfamily. GABRG3 sub-subfamily. As to quaternary structure, heteropentamer, formed by a combination of alpha (GABRA1-6), beta (GABRB1-3), gamma (GABRG1-3), delta (GABRD), epsilon (GABRE), rho (GABRR1-3), pi (GABRP) and theta (GABRQ) chains, each subunit exhibiting distinct physiological and pharmacological properties. In terms of processing, may be palmitoylated. As to expression, expressed in brain.

Its subcellular location is the postsynaptic cell membrane. It is found in the cell membrane. It carries out the reaction chloride(in) = chloride(out). With respect to regulation, allosterically potentiated by alphaxalone. Allosterically inhibited by pregnenolone sulfate. Inhibited by zinc and lanthanum. Gamma subunit of the heteropentameric ligand-gated chloride channel gated by gamma-aminobutyric acid (GABA), a major inhibitory neurotransmitter in the brain. GABA-gated chloride channels, also named GABA(A) receptors (GABAAR), consist of five subunits arranged around a central pore and contain GABA active binding site(s) located at the alpha and beta subunit interface(s). When activated by GABA, GABAARs selectively allow the flow of chloride across the cell membrane down their electrochemical gradient. This chain is Gamma-aminobutyric acid receptor subunit gamma-3, found in Rattus norvegicus (Rat).